Consider the following 359-residue polypeptide: Protein Wnt-8a (359 aa).

Positions 1–25 (MNPCQIFASLVMSICCHILSSTAWS) are cleaved as a signal peptide. Cysteines 55 and 66 form a disulfide. N104 carries N-linked (GlcNAc...) asparagine glycosylation. Disulfide bonds link C105/C113, C115/C133, C181/C195, C183/C190, C260/C298, C276/C291, C295/C337, C313/C328, C315/C325, and C320/C321. A lipid anchor (O-palmitoleoyl serine) is attached at S187. N-linked (GlcNAc...) asparagine glycosylation is found at N263 and N282. Residue N348 is glycosylated (N-linked (GlcNAc...) asparagine).

This sequence belongs to the Wnt family. Post-translationally, palmitoleoylation is required for efficient binding to frizzled receptors. Depalmitoleoylation leads to Wnt signaling pathway inhibition. In terms of processing, proteolytic processing by tiki1 and tiki2 promotes oxidation and formation of large disulfide-bond oligomers, leading to inactivation of wnt8. Expressed in the margin of the pregastrula embryo destined to be the future mesoderm.

It is found in the secreted. It localises to the extracellular space. Its subcellular location is the extracellular matrix. Its function is as follows. Ligand for members of the frizzled family of seven transmembrane receptors. Required for mesoderm and neural ectoderm patterning during gastrulation. Involved in axis formation during embryonic development, via activation of canonical Wnt/CTNNB1 signaling. May be involved in the specification of the spatial patterns of expression of Gsc and other regulatory genes leading to the establishment of the embryonic axis. This Danio rerio (Zebrafish) protein is Protein Wnt-8a (wnt8a).